Here is a 306-residue protein sequence, read N- to C-terminus: Homoserine kinase (306 aa).

95–105 (PQSRGLGSSAA) contacts ATP.

This sequence belongs to the GHMP kinase family. Homoserine kinase subfamily.

It localises to the cytoplasm. The catalysed reaction is L-homoserine + ATP = O-phospho-L-homoserine + ADP + H(+). Its pathway is amino-acid biosynthesis; L-threonine biosynthesis; L-threonine from L-aspartate: step 4/5. In terms of biological role, catalyzes the ATP-dependent phosphorylation of L-homoserine to L-homoserine phosphate. This chain is Homoserine kinase, found in Corynebacterium urealyticum (strain ATCC 43042 / DSM 7109).